The primary structure comprises 420 residues: MLKRSMNIADYDPVLWQAIQDENRRQEEHIELIASENYASPRVMEAQGSQFTNKYAEGYPGKRYYGGCEYADIVEQLAIDRAKELFHADYVNVQPHSGSQANAAVYGALLQPHDTILGMSLAHGGHLTHGASVSFSGKIYNAVQYGITAEGLIDYEDVRQKALECKPKMIVAGFSAYSQVVDWAKMREIADEVGAYLFVDMAHVAGLIAAGVYPSPLPHAHVVTTTTHKTLGGPRGGLILSAAKDEDLYKKLQSSVFPANQGGPLVHVIAAKAVCFKEALEPEYKVYQQQVVKNAKAMVDVFKQRGYNVVSNGTENHLFLVDLVSHGLTGKAADAALGSANITVNKNAVPNDPQKPFVTSGIRVGTPSITRRGFKEAESAELAGWMCDVLDAMGKDNEAQVIAQTKEKVLAICKRLPVYA.

Residues L121 and 125–127 (GHL) each bind (6S)-5,6,7,8-tetrahydrofolate. K229 carries the post-translational modification N6-(pyridoxal phosphate)lysine.

This sequence belongs to the SHMT family. As to quaternary structure, homodimer. Pyridoxal 5'-phosphate is required as a cofactor.

The protein localises to the cytoplasm. It catalyses the reaction (6R)-5,10-methylene-5,6,7,8-tetrahydrofolate + glycine + H2O = (6S)-5,6,7,8-tetrahydrofolate + L-serine. It participates in one-carbon metabolism; tetrahydrofolate interconversion. The protein operates within amino-acid biosynthesis; glycine biosynthesis; glycine from L-serine: step 1/1. Its function is as follows. Catalyzes the reversible interconversion of serine and glycine with tetrahydrofolate (THF) serving as the one-carbon carrier. This reaction serves as the major source of one-carbon groups required for the biosynthesis of purines, thymidylate, methionine, and other important biomolecules. Also exhibits THF-independent aldolase activity toward beta-hydroxyamino acids, producing glycine and aldehydes, via a retro-aldol mechanism. This Pasteurella multocida (strain Pm70) protein is Serine hydroxymethyltransferase.